The chain runs to 603 residues: Isocitrate dehydrogenase kinase/phosphatase (603 aa).

Residues 327-333 (APGIKGL) and K348 each bind ATP. D383 is an active-site residue.

The protein belongs to the AceK family.

The protein resides in the cytoplasm. It catalyses the reaction L-seryl-[isocitrate dehydrogenase] + ATP = O-phospho-L-seryl-[isocitrate dehydrogenase] + ADP + H(+). Its function is as follows. Bifunctional enzyme which can phosphorylate or dephosphorylate isocitrate dehydrogenase (IDH) on a specific serine residue. This is a regulatory mechanism which enables bacteria to bypass the Krebs cycle via the glyoxylate shunt in response to the source of carbon. When bacteria are grown on glucose, IDH is fully active and unphosphorylated, but when grown on acetate or ethanol, the activity of IDH declines drastically concomitant with its phosphorylation. This is Isocitrate dehydrogenase kinase/phosphatase from Burkholderia thailandensis (strain ATCC 700388 / DSM 13276 / CCUG 48851 / CIP 106301 / E264).